The primary structure comprises 350 residues: D-guloside 3-dehydrogenase (350 aa).

It belongs to the zinc-containing alcohol dehydrogenase family. Zn(2+) is required as a cofactor.

The catalysed reaction is a D-guloside + NAD(+) = a 3-dehydro-D-guloside + NADH + H(+). Its function is as follows. Catalyzes the NAD(+)-dependent oxidation of the hydroxyl group at C3 of D-gulosides leading to 3-dehydro-D-gulosides. Probably functions in a metabolic pathway that transforms D-gulosides to D-glucosides. Is also able to catalyze the reverse reactions, i.e. the NADH-dependent reduction of the oxo group at C3 of 3-dehydro-D-gulosides leading to D-gulosides. In vitro, can oxidize D-gulose and methyl beta-D-guloside, and reduce methyl alpha-3-dehydro-D-guloside and methyl beta-3-dehydro-D-guloside. However, the actual specific physiological substrates for this metabolic pathway are unknown. The protein is D-guloside 3-dehydrogenase (ycjQ) of Shigella flexneri.